A 118-amino-acid chain; its full sequence is DNA-binding protein M164_1799 (118 aa).

It belongs to the PDCD5 family.

This chain is DNA-binding protein M164_1799, found in Saccharolobus islandicus (strain M.16.4 / Kamchatka #3) (Sulfolobus islandicus).